Here is a 487-residue protein sequence, read N- to C-terminus: Protein NEN2 (487 aa).

The 162-residue stretch at 18-179 (FFDVETTIPF…LDDVRMNFEV (162 aa)) folds into the Exonuclease domain. Mg(2+)-binding residues include aspartate 20 and glutamate 22. Catalysis depends on histidine 167, which acts as the Proton donor/acceptor. Aspartate 172 is a Mg(2+) binding site. Disordered regions lie at residues 200-233 (NSVTTTTPETSSRRRRTIKKSPLQSPTDQQTGEN) and 269-291 (SDVPMEEEQNQQSETVASEGTGD). Residues 221–233 (PLQSPTDQQTGEN) show a composition bias toward polar residues.

Mg(2+) serves as cofactor. As to expression, expressed in the sieve elements and phloem pole pericycle cells.

It is found in the cytoplasm. Its subcellular location is the nucleus. Probable exonuclease involved in enuclation of sieve elements. This chain is Protein NEN2, found in Arabidopsis thaliana (Mouse-ear cress).